A 291-amino-acid chain; its full sequence is uncharacterized protein (291 aa).

Residues 77-140 are disordered; the sequence is TVPQSSPTAI…PPTPVVEKSP (64 aa). Residues 125-134 are compositionally biased toward pro residues; that stretch reads PVTPAHPPTP.

This is an uncharacterized protein from Synechocystis sp. (strain ATCC 27184 / PCC 6803 / Kazusa).